The following is a 257-amino-acid chain: Type III pantothenate kinase (257 aa).

6-13 (DVGNTNTV) contacts ATP. Residues Tyr102 and 109-112 (GADR) each bind substrate. The active-site Proton acceptor is Asp111. Asp131 contributes to the K(+) binding site. Position 134 (Thr134) interacts with ATP. Residue Thr186 participates in substrate binding.

The protein belongs to the type III pantothenate kinase family. In terms of assembly, homodimer. Requires NH4(+) as cofactor. The cofactor is K(+).

Its subcellular location is the cytoplasm. The enzyme catalyses (R)-pantothenate + ATP = (R)-4'-phosphopantothenate + ADP + H(+). The protein operates within cofactor biosynthesis; coenzyme A biosynthesis; CoA from (R)-pantothenate: step 1/5. Catalyzes the phosphorylation of pantothenate (Pan), the first step in CoA biosynthesis. This Leptospira interrogans serogroup Icterohaemorrhagiae serovar copenhageni (strain Fiocruz L1-130) protein is Type III pantothenate kinase.